Consider the following 204-residue polypeptide: MNSPETAEYNGHPTGHVFDQARAEAAVRELLYAVGEDPDRHGLADTPARVARAYREIFAGLYTDPDTVLNTTFDEQHDELVLVKSIPMYSTCEHHLVSFHGVAHVGYIPGQHGRVTGLSKIARLVDLYAKRPQVQERLTAQIADALVRKLEPRGVIVVVEAEHLCMAMRGVRKPGATTTTSAVRGQFKRDAASRAEVLDLMMRT.

Zn(2+) contacts are provided by Cys-92, His-95, and Cys-165.

The protein belongs to the GTP cyclohydrolase I family. As to quaternary structure, homomer.

The catalysed reaction is GTP + H2O = 7,8-dihydroneopterin 3'-triphosphate + formate + H(+). The protein operates within cofactor biosynthesis; 7,8-dihydroneopterin triphosphate biosynthesis; 7,8-dihydroneopterin triphosphate from GTP: step 1/1. The chain is GTP cyclohydrolase 1 from Mycobacteroides abscessus (strain ATCC 19977 / DSM 44196 / CCUG 20993 / CIP 104536 / JCM 13569 / NCTC 13031 / TMC 1543 / L948) (Mycobacterium abscessus).